A 356-amino-acid polypeptide reads, in one-letter code: NF-kappa-B inhibitor beta (356 aa).

A phosphoserine; by RPS6KA1 mark is found at Ser19 and Ser23. ANK repeat units lie at residues Asp57–Tyr86, Leu93–Val122, and Arg126–Arg155. Residues Pro149–Glu193 are disordered. At Ser183 the chain carries Phosphoserine. Over residues Ser183–Glu193 the composition is skewed to acidic residues. 3 ANK repeats span residues Glu206–Lys235, Cys240–Ala269, and Gly273–Glu302. The interval Ala298–Val356 is disordered. Phosphoserine; by CK2 occurs at positions 313 and 315. Residues Asp318–Asp328 show a composition bias toward acidic residues.

Belongs to the NF-kappa-B inhibitor family. Interacts with THRB (via ligand-binding domain). Interacts with RELA and REL. Interacts with COMMD1. Interacts with inhibitor kappa B-interacting Ras-like NKIRAS1 and NKIRAS2. In terms of processing, phosphorylated by RPS6KA1; followed by degradation. Interaction with NKIRAS1 and NKIRAS2 probably prevents phosphorylation. As to expression, expressed in all tissues examined.

Its subcellular location is the cytoplasm. It localises to the nucleus. Functionally, inhibits NF-kappa-B by complexing with and trapping it in the cytoplasm. However, the unphosphorylated form resynthesized after cell stimulation is able to bind NF-kappa-B allowing its transport to the nucleus and protecting it to further NFKBIA-dependent inactivation. Association with inhibitor kappa B-interacting NKIRAS1 and NKIRAS2 prevent its phosphorylation rendering it more resistant to degradation, explaining its slower degradation. In Homo sapiens (Human), this protein is NF-kappa-B inhibitor beta (NFKBIB).